The sequence spans 239 residues: Pyridoxine 5'-phosphate synthase (239 aa).

Asn7 is a binding site for 3-amino-2-oxopropyl phosphate. 9-10 (DH) contributes to the 1-deoxy-D-xylulose 5-phosphate binding site. 3-amino-2-oxopropyl phosphate is bound at residue Arg18. The active-site Proton acceptor is the His43. 2 residues coordinate 1-deoxy-D-xylulose 5-phosphate: Arg45 and His50. Glu70 (proton acceptor) is an active-site residue. Thr100 serves as a coordination point for 1-deoxy-D-xylulose 5-phosphate. Catalysis depends on His191, which acts as the Proton donor. 3-amino-2-oxopropyl phosphate contacts are provided by residues Gly192 and 213–214 (GH).

It belongs to the PNP synthase family. As to quaternary structure, homooctamer; tetramer of dimers.

Its subcellular location is the cytoplasm. It catalyses the reaction 3-amino-2-oxopropyl phosphate + 1-deoxy-D-xylulose 5-phosphate = pyridoxine 5'-phosphate + phosphate + 2 H2O + H(+). It participates in cofactor biosynthesis; pyridoxine 5'-phosphate biosynthesis; pyridoxine 5'-phosphate from D-erythrose 4-phosphate: step 5/5. Its function is as follows. Catalyzes the complicated ring closure reaction between the two acyclic compounds 1-deoxy-D-xylulose-5-phosphate (DXP) and 3-amino-2-oxopropyl phosphate (1-amino-acetone-3-phosphate or AAP) to form pyridoxine 5'-phosphate (PNP) and inorganic phosphate. In Geotalea uraniireducens (strain Rf4) (Geobacter uraniireducens), this protein is Pyridoxine 5'-phosphate synthase.